The chain runs to 191 residues: Recombination protein RecR (191 aa).

The C4-type zinc-finger motif lies at 51–66 (CQTCFHLSADPECEIC). Residues 74 to 168 (GVICVVADSR…SVSRIAYGLP (95 aa)) enclose the Toprim domain.

Belongs to the RecR family.

May play a role in DNA repair. It seems to be involved in an RecBC-independent recombinational process of DNA repair. It may act with RecF and RecO. The polypeptide is Recombination protein RecR (Synechococcus sp. (strain CC9605)).